Reading from the N-terminus, the 358-residue chain is Nuclear receptor subfamily 1 group I member 3 (358 aa).

The nuclear receptor DNA-binding region spans 18 to 93 (PRNCVVCGDR…VGMRKDMILS (76 aa)). The NR C4-type zinc-finger motif lies at 21-41 (CVVCGDRATGYHFHALTCEGC). The residue at position 48 (threonine 48) is a Phosphothreonine; by PKC. The NR C4-type zinc-finger motif lies at 57 to 81 (CPFAGRCEVSKAQRRHCPACRLQKC). Positions 119–358 (QQKELIQTLL…MMPLLGEICS (240 aa)) constitute an NR LBD domain.

The protein belongs to the nuclear hormone receptor family. NR1 subfamily. Heterodimer of NR1I3 and RXR. Interacts with PSMC4. Interacts with ECT2. Directly interacts with DNAJC7; this complex may also include HSP90. Interacts with CRY1. Interacts with CRY2 in a ligand-dependent manner. In terms of processing, phosphorylated at Thr-48 by PKC, dephosphorylation of Thr-48 is required for nuclear translocation and activation.

Its subcellular location is the nucleus. The protein localises to the cytoplasm. It is found in the cytoskeleton. Its function is as follows. Binds and transactivates the retinoic acid response elements that control expression of the retinoic acid receptor beta 2 and alcohol dehydrogenase 3 genes. Transactivates both the phenobarbital responsive element module of the human CYP2B6 gene and the CYP3A4 xenobiotic response element. This is Nuclear receptor subfamily 1 group I member 3 (Nr1i3) from Rattus norvegicus (Rat).